Here is a 267-residue protein sequence, read N- to C-terminus: Tryptophan synthase alpha chain (267 aa).

Active-site proton acceptor residues include Glu-47 and Asp-58.

Belongs to the TrpA family. In terms of assembly, tetramer of two alpha and two beta chains.

The enzyme catalyses (1S,2R)-1-C-(indol-3-yl)glycerol 3-phosphate + L-serine = D-glyceraldehyde 3-phosphate + L-tryptophan + H2O. It functions in the pathway amino-acid biosynthesis; L-tryptophan biosynthesis; L-tryptophan from chorismate: step 5/5. The alpha subunit is responsible for the aldol cleavage of indoleglycerol phosphate to indole and glyceraldehyde 3-phosphate. In Pelodictyon phaeoclathratiforme (strain DSM 5477 / BU-1), this protein is Tryptophan synthase alpha chain.